We begin with the raw amino-acid sequence, 156 residues long: uncharacterized protein (156 aa).

An N-terminal signal peptide occupies residues methionine 1–glycine 27. Asparagine 20, asparagine 83, asparagine 103, asparagine 106, and asparagine 134 each carry an N-linked (GlcNAc...) asparagine glycan.

Its subcellular location is the secreted. This is an uncharacterized protein from Dictyostelium discoideum (Social amoeba).